The chain runs to 924 residues: MAAIEPSGLHPGERDSSCPQEGIPRPSGSLELAQEYLQQFKVTMTQLQQIQASLLCSMEQALKGQDSPAPSVRMLPTYVRSTPHGTEQGDFLVLELGATGASLRVLWVTLTGTKEHSVETRSQEFVIPQEVILGAGQQLFDFAARCLSEFLDAYPVENQGLKLGFNFSFPCHQTGLDKSTLISWTKGFRCSGVEGQDVVQLLRDAIQRQGTYNIDVVAMVNDTVGTMMGCELGTRPCEVGLIVDTGTNACYMEEARHVAALDEDRGRTCVSIEWGSFYDEEALGPVLTTFDDALDHESLVPGAQRFEKMIGGLYLGELVRLVLVHLSQHGVLFGGCASPALLSQNSILLEHVAKMEDPATGIAHVHTVLQGLGLSPQASDAELVQRVCMAVCTRAAQLCASALAAVLSRLQHSREQQTLHVAVATGGRVFEWHPRFLCILKETVMLLAPECDVSFIPSVDGGGRGVAMVTAVAARLATHRRILEETLAPFQLSLEQLTAVQAQMREAMIRGLQGESSSLRMLPTYVRATPDGSERGDFLALDLGGTNFRVLLVRVAEGSVQITNQVYSIPEYVAQGSGQKLFDHIVDCIVDFQKRQGLSGQSLPLGFTFSFPCKQLGLDQGILLNWTKGFNASGCEGQDVVYLLREAIRRRQAVELNVVAIVNDTVGTMMSCGYDDPCCEMGLIVGTGTNACYMEELRNVASVPGDSGHMCINMEWGAFGDDGSLSMLGTCFDASVDQASINPGKQRFEKMISGMYLGEIVRHILLHLTSLGVLFRGQKTQCLQTRDIFKTKFLSEIESDSLALRQVRAILEDLGLTLTSDDALMVLEVCQAVSRRAAQLCGAGVAAVVEKIRENRGLQELTVSVGVDGTLYKLHPHFSRLVSVTVRKLAPQCTVTFLQSEDGSGKGAALVTRVACRLTQMACV.

Positions 1–27 (MAAIEPSGLHPGERDSSCPQEGIPRPS) are disordered. Hexokinase domains are found at residues 27 to 471 (SGSL…MVTA) and 477 to 913 (ATHR…LVTR). Residues 84–220 (HGTEQGDFLV…TYNIDVVAMV (137 aa)) are hexokinase small subdomain 1. 95–102 (ELGATGAS) is a binding site for ATP. 95 to 104 (ELGATGASLR) is a D-glucose 6-phosphate binding site. D-glucose-binding positions include Ser-168, 185 to 186 (TK), and 221 to 222 (ND). The tract at residues 221–460 (NDTVGTMMGC…CDVSFIPSVD (240 aa)) is hexokinase large subdomain 1. The D-glucose 6-phosphate site is built by Asp-222 and Thr-245. D-glucose-binding positions include Asn-248, Glu-273, and 304 to 307 (QRFE). 426–428 (GGR) serves as a coordination point for D-glucose 6-phosphate. ATP is bound by residues 438-439 (CI) and 542-547 (DLGGTN). The interval 531-662 (DGSERGDFLA…AVELNVVAIV (132 aa)) is hexokinase small subdomain 2. Residue 542–546 (DLGGT) participates in D-glucose 6-phosphate binding. Residues 610-611 (SF), 627-628 (TK), and 663-664 (ND) contribute to the D-glucose site. A hexokinase large subdomain 2 region spans residues 663–902 (NDTVGTMMSC…CTVTFLQSED (240 aa)). Residues Asp-664 and Thr-687 each contribute to the D-glucose 6-phosphate site. An ATP-binding site is contributed by Thr-687. D-glucose contacts are provided by residues 689-690 (TN), Glu-715, and Glu-749. Residues 754 to 755 (GM), 791 to 795 (TKFLS), and 870 to 874 (TLYKL) contribute to the ATP site. D-glucose 6-phosphate-binding positions include 868 to 870 (DGT) and Ser-904.

Belongs to the hexokinase family.

It catalyses the reaction a D-hexose + ATP = a D-hexose 6-phosphate + ADP + H(+). The enzyme catalyses D-fructose + ATP = D-fructose 6-phosphate + ADP + H(+). The catalysed reaction is D-glucose + ATP = D-glucose 6-phosphate + ADP + H(+). The protein operates within carbohydrate metabolism; hexose metabolism. It participates in carbohydrate degradation; glycolysis; D-glyceraldehyde 3-phosphate and glycerone phosphate from D-glucose: step 1/4. Hexokinase is an allosteric enzyme inhibited by its product D-glucose 6-phosphate. Its function is as follows. Catalyzes the phosphorylation of hexose, such as D-glucose and D-fructose, to hexose 6-phosphate (D-glucose 6-phosphate and D-fructose 6-phosphate, respectively). Mediates the initial step of glycolysis by catalyzing phosphorylation of D-glucose to D-glucose 6-phosphate. The chain is Hexokinase-3 from Rattus norvegicus (Rat).